The primary structure comprises 333 residues: Adenosine deaminase (333 aa).

Residues histidine 12 and histidine 14 each contribute to the Zn(2+) site. Substrate contacts are provided by histidine 14, aspartate 16, and glycine 170. Position 197 (histidine 197) interacts with Zn(2+). The Proton donor role is filled by glutamate 200. Aspartate 278 provides a ligand contact to Zn(2+). Aspartate 279 contacts substrate.

This sequence belongs to the metallo-dependent hydrolases superfamily. Adenosine and AMP deaminases family. Adenosine deaminase subfamily. Zn(2+) is required as a cofactor.

The enzyme catalyses adenosine + H2O + H(+) = inosine + NH4(+). It carries out the reaction 2'-deoxyadenosine + H2O + H(+) = 2'-deoxyinosine + NH4(+). Its function is as follows. Catalyzes the hydrolytic deamination of adenosine and 2-deoxyadenosine. This is Adenosine deaminase from Escherichia coli (strain SMS-3-5 / SECEC).